Consider the following 195-residue polypeptide: ATP-dependent Clp protease proteolytic subunit (195 aa).

S98 (nucleophile) is an active-site residue. The active site involves H123.

It belongs to the peptidase S14 family. In terms of assembly, fourteen ClpP subunits assemble into 2 heptameric rings which stack back to back to give a disk-like structure with a central cavity, resembling the structure of eukaryotic proteasomes.

The protein resides in the cytoplasm. The catalysed reaction is Hydrolysis of proteins to small peptides in the presence of ATP and magnesium. alpha-casein is the usual test substrate. In the absence of ATP, only oligopeptides shorter than five residues are hydrolyzed (such as succinyl-Leu-Tyr-|-NHMec, and Leu-Tyr-Leu-|-Tyr-Trp, in which cleavage of the -Tyr-|-Leu- and -Tyr-|-Trp bonds also occurs).. Cleaves peptides in various proteins in a process that requires ATP hydrolysis. Has a chymotrypsin-like activity. Plays a major role in the degradation of misfolded proteins. The chain is ATP-dependent Clp protease proteolytic subunit from Staphylococcus aureus (strain Mu3 / ATCC 700698).